A 572-amino-acid chain; its full sequence is Asparagine synthetase [glutamine-hydrolyzing] 1 (572 aa).

Catalysis depends on Cys2, which acts as the For GATase activity. In terms of domain architecture, Glutamine amidotransferase type-2 spans 2–186 (CGIFAAFRHE…PGHVYDSKTD (185 aa)). Residues 49-53 (RLAIV), 74-76 (NGE), and Asp97 contribute to the L-glutamine site. The region spanning 194–546 (PDWLDEKRIP…QKTVADTVMR (353 aa)) is the Asparagine synthetase domain. Residue Leu233 coordinates ATP. Ser265 bears the Phosphoserine mark. ATP is bound by residues Ile292 and 366-367 (SG). Phosphoserine is present on Ser509.

It carries out the reaction L-aspartate + L-glutamine + ATP + H2O = L-asparagine + L-glutamate + AMP + diphosphate + H(+). Its pathway is amino-acid biosynthesis; L-asparagine biosynthesis; L-asparagine from L-aspartate (L-Gln route): step 1/1. This is Asparagine synthetase [glutamine-hydrolyzing] 1 (ASN1) from Saccharomyces cerevisiae (strain ATCC 204508 / S288c) (Baker's yeast).